We begin with the raw amino-acid sequence, 347 residues long: Serpentine receptor class beta-2 (347 aa).

A run of 7 helical transmembrane segments spans residues 27 to 47 (IAQL…YIFL), 62 to 82 (FLLV…AFLF), 108 to 128 (GNLS…GFSI), 146 to 166 (FLGP…LYHV), 194 to 214 (FWEL…FLLV), 246 to 266 (LIVS…TIFV), and 288 to 308 (ITVP…LSFM).

The protein belongs to the nematode receptor-like protein srb family.

The protein localises to the membrane. The polypeptide is Serpentine receptor class beta-2 (srb-2) (Caenorhabditis elegans).